We begin with the raw amino-acid sequence, 456 residues long: tRNA modification GTPase MnmE (456 aa).

(6S)-5-formyl-5,6,7,8-tetrahydrofolate is bound by residues K29, E87, and R126. The TrmE-type G domain occupies 222–380 (GYKLAIIGRP…LLSLLASWLD (159 aa)). N232 contacts K(+). Residues 232 to 237 (NVGKSS), 251 to 257 (SDIPGTT), and 276 to 279 (DTAG) contribute to the GTP site. S236 serves as a coordination point for Mg(2+). Positions 251, 253, and 256 each coordinate K(+). Residue T257 coordinates Mg(2+). K456 is a (6S)-5-formyl-5,6,7,8-tetrahydrofolate binding site.

It belongs to the TRAFAC class TrmE-Era-EngA-EngB-Septin-like GTPase superfamily. TrmE GTPase family. Homodimer. Heterotetramer of two MnmE and two MnmG subunits. The cofactor is K(+).

The protein resides in the cytoplasm. Exhibits a very high intrinsic GTPase hydrolysis rate. Involved in the addition of a carboxymethylaminomethyl (cmnm) group at the wobble position (U34) of certain tRNAs, forming tRNA-cmnm(5)s(2)U34. The chain is tRNA modification GTPase MnmE from Wolinella succinogenes (strain ATCC 29543 / DSM 1740 / CCUG 13145 / JCM 31913 / LMG 7466 / NCTC 11488 / FDC 602W) (Vibrio succinogenes).